A 119-amino-acid chain; its full sequence is Large ribosomal subunit protein uL18 (119 aa).

This sequence belongs to the universal ribosomal protein uL18 family. As to quaternary structure, part of the 50S ribosomal subunit; part of the 5S rRNA/L5/L18/L25 subcomplex. Contacts the 5S and 23S rRNAs.

Functionally, this is one of the proteins that bind and probably mediate the attachment of the 5S RNA into the large ribosomal subunit, where it forms part of the central protuberance. In Staphylococcus aureus (strain bovine RF122 / ET3-1), this protein is Large ribosomal subunit protein uL18.